The sequence spans 760 residues: Armadillo-like helical domain-containing protein 4 (760 aa).

The N-terminal stretch at 1–27 (MSRPIVLHICLAFCSLLLLNFAAQCLA) is a signal peptide. Residues 28–700 (FPNLERREIV…KDKAGYMSGM (673 aa)) lie on the Extracellular side of the membrane. 6 disordered regions span residues 49 to 69 (LNTD…SGDP), 117 to 143 (GEEV…LTNP), 216 to 243 (RTEK…TEPS), 373 to 392 (HGGE…PMGD), 474 to 495 (TRGE…DAPR), and 536 to 652 (NEEL…SQEP). A glycan (N-linked (GlcNAc...) asparagine) is linked at Asn56. The segment covering 216–228 (RTEKFEANPEHKT) has biased composition (basic and acidic residues). The span at 380 to 390 (DQSSVTPTSPM) shows a compositional bias: polar residues. A compositionally biased stretch (basic and acidic residues) spans 474–484 (TRGEDETKGGR). Over residues 594 to 635 (LESEEGEDDEDEEDEEEEDEEEEDEEEDEEDKDADSLDEALG) the composition is skewed to acidic residues. Residues 701-721 (LVPVGVGIAGALFILGALYSI) form a helical membrane-spanning segment. The Cytoplasmic segment spans residues 722–760 (KVMNRRRRNGFKRHKRKQREFNSMQDRVMLLADSSEDEF). Ser755 and Ser756 each carry phosphoserine.

Interacts with IL6ST; this interaction prevents IL6ST protein homodimerization and bridges ARMH4 with IL6R and STAT3 and therefore inhibits phosphorylation of STAT3 at 'Tyr-705'. Interacts (via cytoplasmic tail) with RICTOR; this interaction bridges ARMH4 to the mTORC2 complex and inhibits the mTORC2 kinase activity.

It is found in the membrane. In terms of biological role, may modulate immune response and may play a role in inflammation. Down-modulates STAT3 signaling throught direct interaction with IL6ST, resulting in the inhibition of phosphorylation of STAT3 at Tyr-705. May negatively regulates AKT signaling by modulating the activity of mTORC2 complex through RICTOR interaction. This is Armadillo-like helical domain-containing protein 4 from Bos taurus (Bovine).